The following is a 409-amino-acid chain: Bone morphogenetic protein 4 (409 aa).

The signal sequence occupies residues 1-24 (MIPGNRMLMVVLLCQVLLGGASHA). The propeptide occupies 25 to 293 (SLIPETGKKK…ALTRRRRAKR (269 aa)). S91 is modified (phosphoserine). N-linked (GlcNAc...) asparagine glycans are attached at residues N144 and N209. Residues 284–308 (ALTRRRRAKRSPKHHPQRARKKNKN) form a disordered region. 3 disulfides stabilise this stretch: C309/C374, C338/C406, and C342/C408. 2 N-linked (GlcNAc...) asparagine glycosylation sites follow: N351 and N366.

Belongs to the TGF-beta family. In terms of assembly, homodimer; disulfide-linked. Interacts with GREM2. Part of a complex consisting of TWSG1 and CHRD. Interacts with the serine proteases, HTRA1 and HTRA3; the interaction with either inhibits BMP4-mediated signaling. The HTRA protease activity is required for this inhibition. Interacts with SOSTDC1. Interacts with FBN1 (via N-terminal domain) and FBN2. Interacts with type I receptor BMPR1A. Interacts with type II receptor BMPR2. Interacts with FSTL1; this interaction inhibits the activation of the BMP4/Smad1/5/8 signaling pathway. Interacts with SCUBE3. Interacts with TGFBR3.

The protein resides in the secreted. Its subcellular location is the extracellular space. It localises to the extracellular matrix. Its function is as follows. Growth factor of the TGF-beta superfamily that plays essential roles in many developmental processes, including neurogenesis, vascular development, angiogenesis and osteogenesis. Acts in concert with PTHLH/PTHRP to stimulate ductal outgrowth during embryonic mammary development and to inhibit hair follicle induction. Initiates the canonical BMP signaling cascade by associating with type I receptor BMPR1A and type II receptor BMPR2. Once all three components are bound together in a complex at the cell surface, BMPR2 phosphorylates and activates BMPR1A. In turn, BMPR1A propagates signal by phosphorylating SMAD1/5/8 that travel to the nucleus and act as activators and repressors of transcription of target genes. Positively regulates the expression of odontogenic development regulator MSX1 via inducing the IPO7-mediated import of SMAD1 to the nucleus. Required for MSX1-mediated mesenchymal molar tooth bud development beyond the bud stage, via promoting Wnt signaling. Acts as a positive regulator of odontoblast differentiation during mesenchymal tooth germ formation, expression is repressed during the bell stage by MSX1-mediated inhibition of CTNNB1 signaling. Able to induce its own expression in dental mesenchymal cells and also in the neighboring dental epithelial cells via an MSX1-mediated pathway. Can also signal through non-canonical BMP pathways such as ERK/MAP kinase, PI3K/Akt, or SRC cascades. For example, induces SRC phosphorylation which, in turn, activates VEGFR2, leading to an angiogenic response. The polypeptide is Bone morphogenetic protein 4 (Bos taurus (Bovine)).